The following is a 203-amino-acid chain: Glycerol-3-phosphate acyltransferase (203 aa).

The next 4 helical transmembrane spans lie at 7-27 (TLLM…VLVC), 82-102 (AVSL…PVFF), 118-138 (APIG…LLLI), and 141-161 (YSSL…WWLD).

The protein belongs to the PlsY family. Probably interacts with PlsX.

Its subcellular location is the cell inner membrane. The enzyme catalyses an acyl phosphate + sn-glycerol 3-phosphate = a 1-acyl-sn-glycero-3-phosphate + phosphate. It functions in the pathway lipid metabolism; phospholipid metabolism. Functionally, catalyzes the transfer of an acyl group from acyl-phosphate (acyl-PO(4)) to glycerol-3-phosphate (G3P) to form lysophosphatidic acid (LPA). This enzyme utilizes acyl-phosphate as fatty acyl donor, but not acyl-CoA or acyl-ACP. The polypeptide is Glycerol-3-phosphate acyltransferase (Shewanella baltica (strain OS223)).